The chain runs to 118 residues: Large ribosomal subunit protein uL24 (118 aa).

The protein belongs to the universal ribosomal protein uL24 family. Part of the 50S ribosomal subunit.

Functionally, one of two assembly initiator proteins, it binds directly to the 5'-end of the 23S rRNA, where it nucleates assembly of the 50S subunit. Its function is as follows. One of the proteins that surrounds the polypeptide exit tunnel on the outside of the subunit. This chain is Large ribosomal subunit protein uL24, found in Prochlorococcus marinus (strain MIT 9301).